We begin with the raw amino-acid sequence, 637 residues long: Tumor protein p73 (637 aa).

The interval 1-46 (MAQSTTTSPDGGTTFEHLWSSLEPDSTYFDLPQSSRGNNEVVGGTD) is transactivation. Residue threonine 27 is modified to Phosphothreonine. Tyrosine 28 bears the Phosphotyrosine; by SRC and HCK mark. The interval 78–104 (RAASASPYTPEHAASVPTHSPYAQPSS) is disordered. Residues 94–104 (PTHSPYAQPSS) are compositionally biased toward polar residues. Tyrosine 99 bears the Phosphotyrosine mark. The tract at residues 131–310 (FQQSSTAKSA…DRKADEDHYR (180 aa)) is DNA-binding. Residues cysteine 194, histidine 197, cysteine 258, and cysteine 262 each contribute to the Zn(2+) site. Residues 301–311 (DRKADEDHYRE) are compositionally biased toward basic and acidic residues. Residues 301 to 351 (DRKADEDHYREQQALNESSAKNGAASKRAFKQSPPAVPALGPGVKKRRHGD) are disordered. The interaction with HIPK2 stretch occupies residues 345 to 380 (KKRRHGDEDTYYLQVRGRENFEILMKLKESLELMEL). The segment at 345-386 (KKRRHGDEDTYYLQVRGRENFEILMKLKESLELMELVPQPLV) is oligomerization. The PPxY motif motif lies at 483 to 487 (PPPPY). The 67-residue stretch at 485-551 (PPYHADPSLV…WRGLQDLKQG (67 aa)) folds into the SAM domain. Residue lysine 628 forms a Glycyl lysine isopeptide (Lys-Gly) (interchain with G-Cter in SUMO); in isoform Alpha linkage. Lysine 628 is covalently cross-linked (Glycyl lysine isopeptide (Lys-Gly) (interchain with G-Cter in SUMO2)).

The protein belongs to the p53 family. In terms of assembly, found in a complex with p53/TP53 and CABLES1. The C-terminal oligomerization domain binds to the ABL1 tyrosine kinase SH3 domain. Interacts with HECW2. Isoforms Alpha and Beta interact with HIPK2. Isoform Alpha interacts with RANBP9. Interacts with WWOX. Isoform Beta interacts homotypically and with p53, whereas isoform Alpha does not. Interacts (via SAM domain) with FBXO45 (via B30.2/SPRY domain). Interacts with YAP1 (phosphorylated form). Interacts with HCK (via SH3 domain); this inhibits TP73 activity and degradation. The cofactor is Zn(2+). Isoform Alpha (but not isoform Beta) is sumoylated on Lys-628, which potentiates proteasomal degradation but does not affect transcriptional activity. Post-translationally, polyubiquitinated by RCHY1/PIRH2; leading to its degradation by the proteasome.

The protein resides in the nucleus. Its subcellular location is the cytoplasm. Its function is as follows. Participates in the apoptotic response to DNA damage. May be a tumor suppressor protein. Is an activator of FOXJ1 expression, essential for the positive regulation of lung ciliated cell differentiation. The sequence is that of Tumor protein p73 (TP73) from Chlorocebus aethiops (Green monkey).